The chain runs to 746 residues: Bud site selection protein 7 (746 aa).

Residues 733 to 746 (LNFFTTCTIGCYDA) are CHS5-binding.

The protein belongs to the CHAPS family. In terms of assembly, component of the CHS5/6 complex composed of the 4 CHAPS proteins BCH1, BCH2v, BUD7, and CHS6 as well as at least CHS5 and GTP-bound ARF1. The complex interacts with the cargo protein CHS3.

Its subcellular location is the golgi apparatus. It localises to the trans-Golgi network membrane. Member of the CHS5-ARF1P-binding proteins (CHAPS) which mediates export of specific cargo proteins, including chitin synthase CHS3. May be involved in positioning the proximal bud pole signal. The polypeptide is Bud site selection protein 7 (BUD7) (Saccharomyces cerevisiae (strain ATCC 204508 / S288c) (Baker's yeast)).